A 404-amino-acid chain; its full sequence is Probable tRNA sulfurtransferase (404 aa).

The THUMP domain maps to 60 to 165 (QPIVEALKLV…DEAAYISYEE (106 aa)). ATP-binding positions include 183 to 184 (ML), 208 to 209 (HF), R265, G287, and Q296.

The protein belongs to the ThiI family.

The protein resides in the cytoplasm. The catalysed reaction is [ThiI sulfur-carrier protein]-S-sulfanyl-L-cysteine + a uridine in tRNA + 2 reduced [2Fe-2S]-[ferredoxin] + ATP + H(+) = [ThiI sulfur-carrier protein]-L-cysteine + a 4-thiouridine in tRNA + 2 oxidized [2Fe-2S]-[ferredoxin] + AMP + diphosphate. It carries out the reaction [ThiS sulfur-carrier protein]-C-terminal Gly-Gly-AMP + S-sulfanyl-L-cysteinyl-[cysteine desulfurase] + AH2 = [ThiS sulfur-carrier protein]-C-terminal-Gly-aminoethanethioate + L-cysteinyl-[cysteine desulfurase] + A + AMP + 2 H(+). The protein operates within cofactor biosynthesis; thiamine diphosphate biosynthesis. Functionally, catalyzes the ATP-dependent transfer of a sulfur to tRNA to produce 4-thiouridine in position 8 of tRNAs, which functions as a near-UV photosensor. Also catalyzes the transfer of sulfur to the sulfur carrier protein ThiS, forming ThiS-thiocarboxylate. This is a step in the synthesis of thiazole, in the thiamine biosynthesis pathway. The sulfur is donated as persulfide by IscS. The sequence is that of Probable tRNA sulfurtransferase from Streptococcus pyogenes serotype M4 (strain MGAS10750).